A 370-amino-acid polypeptide reads, in one-letter code: Homospermidine synthase (370 aa).

It belongs to the deoxyhypusine synthase family. In terms of assembly, homotetramer. The cofactor is NAD(+).

The catalysed reaction is putrescine + spermidine = sym-homospermidine + propane-1,3-diamine. It participates in alkaloid biosynthesis; pyrrolizidine alkaloid biosynthesis. Its function is as follows. Catalyzes the transfer of an aminobutyl unit from spermidine onto putrescine. The resulting polyamine homospermidine is a precursor in the biosynthesis of pyrrolizidine alkaloids. The sequence is that of Homospermidine synthase (HSS1) from Senecio vulgaris (Common groundsel).